The primary structure comprises 95 residues: Small ribosomal subunit protein bS21 (95 aa).

A disordered region spans residues arginine 55–arginine 95. The span at alanine 78–alanine 89 shows a compositional bias: gly residues.

This sequence belongs to the bacterial ribosomal protein bS21 family.

The polypeptide is Small ribosomal subunit protein bS21 (Nitrobacter hamburgensis (strain DSM 10229 / NCIMB 13809 / X14)).